Consider the following 354-residue polypeptide: 3'-5' exonuclease (354 aa).

Residues 1 to 120 are disordered; sequence MERYLTKMPI…PSPEKEKPEK (120 aa). The segment covering 13-50 has biased composition (basic and acidic residues); that stretch reads KANEVPKKEAFAKKETPKVARKATKTDTPKELKDKENA. The segment covering 59-70 has biased composition (basic residues); the sequence is TKGRPGRPAAKR. The segment covering 71–91 has biased composition (basic and acidic residues); the sequence is KNLDTPDVKDEKIAMEEENPP. Residues S104, S110, and S112 each carry the phosphoserine modification. The 3'-5' exonuclease domain occupies 149-314; that stretch reads WVEKQKDDVV…GQVIYRELER (166 aa). Positions 163, 165, and 301 each coordinate Mg(2+).

This sequence belongs to the WRNexo family.

Its subcellular location is the nucleus. Its function is as follows. Has exonuclease activity on both single-stranded and duplex templates bearing overhangs, but not blunt ended duplex DNA, and cleaves in a 3'-5' direction. Essential for the formation of DNA replication focal centers. Has an important role in maintaining genome stability. The polypeptide is 3'-5' exonuclease (Drosophila sechellia (Fruit fly)).